The sequence spans 314 residues: uncharacterized protein (314 aa).

The N-terminal 29 residues, 1 to 29 (MMRLIRTLPLRCFKTRIRRQGSLLCLRCF), are a transit peptide targeting the mitochondrion. The interval 52–74 (SSSPLSKNKEKQEKPEKENEGKH) is disordered. Basic and acidic residues predominate over residues 58-74 (KNKEKQEKPEKENEGKH). A coiled-coil region spans residues 177–207 (LNEHHLQLLKLKRELNSIHDELNEIIIDLLQ). The chain crosses the membrane as a helical span at residues 262-279 (GLLVILVLVCSIMIGVSA). The disordered stretch occupies residues 281-314 (KKERPGLQEPEEPEILAPKEDIDTTFPQDQHDID).

It localises to the mitochondrion membrane. This is an uncharacterized protein from Saccharomyces cerevisiae (strain ATCC 204508 / S288c) (Baker's yeast).